A 184-amino-acid chain; its full sequence is Luciferin-binding protein (184 aa).

EF-hand domains follow at residues 10–45 (YHLRKMKTRMKRVDVTGDGFISREDYELIAVRIAKI), 46–81 (AKLSAEKAEETRQEFLRVADQLGLAPGVRISVEEAA), 98–133 (MAVIQSLIMYDCIDTDKDGYVSLPEFKAFLQAVGPD), and 134–169 (ITDDKAITCFNTLDFNKNGQISRDEFLVTVNDFLFG). Ca(2+)-binding residues include Asp111, Asp113, Asp115, Tyr117, Glu122, Asp147, Asn149, Asn151, Gln153, and Glu158.

This Ca(2+)-dependent protein binds to luciferin. The luciferin of LBP is capable of reacting with luciferase and O(2) only when calcium is bound. This Renilla reniformis (Sea pansy) protein is Luciferin-binding protein.